The primary structure comprises 268 residues: MPSRNDTYDDKALSLPRILCLHGGGTNARIFESQCRVISAHLKPYFRLVFAEAPYESAPGPGVTSVYADYAPFKRWLPWLPEDEHASNEEVVHDIDQAIEEAIMSDDKKGASGPWVALLGFSQGAKLVMSLLIRQDVRRSRHAPPIAGPHWAFGVILAGRAPPVALDAGFFNSTMLCEPSQLDIVRPPDMIDAMSEDHRVRVPTIHMQGLFDQGLHLHREMLEDYCIEGTTRLIEWNAAHVVALKRSDVDVLITHILEVARETGVLRD.

Active-site charge relay system residues include Ser122, Asp212, and His240.

Belongs to the LovG family.

It participates in secondary metabolite biosynthesis. Its function is as follows. Esterase; part of the gene cluster that mediates the biosynthesis of dibenzodioxocinones such as pestalotiollide B, a novel class of inhibitors against cholesterol ester transfer protein (CEPT). The biosynthesis initiates from condensation of acetate and malonate units catalyzed by the non-reducing PKS pks8/GME11356. Pks8/GME11356 lacks a thioesterase (TE) domain, which is important to the cyclizing of the third ring of atrochrysone carboxylic acid, and the esterase GME11355 might play the role of TE and catalyzes the cyclization reaction of the C ring. The lactamase-like protein GME11357 (or other beta-lactamases in Pestalotiopsis microspora) probably hydrolyzes the thioester bond between the ACP of pks8/GME11356 and the intermediate to release atrochrysone carboxylic acid, which is spontaneously dehydrates to form endocrocin anthrone. Endocrocin anthrone is further converted to emodin via the endocrocin intermediate. Emodin is then oxidized by several enzymes such as the Baeyer-Villiger oxidase GME11358, the oxidoreductase GME11367, the short chain dehydrogenase/reductase GME11373, as well as by other oxidoreductases from the cluster, to modify the A and C rings and open the B ring, and finally yield monodictyphenone. The prenyltransferase GME11375 may catalyze the addition reaction between the C5 side chains and the carbon bone of dibenzodioxocinones. The remaining biochemical reactions to the final product dibenzodioxocinones should be methylation catalyzed by methyltransferase GME11366 and reduction and lactonization reaction catalyzed by a series of oxidordeuctases. This is Esterase GME11355 from Pestalotiopsis microspora.